Consider the following 552-residue polypeptide: (R)-mandelonitrile lyase-like (552 aa).

An N-terminal signal peptide occupies residues 1–28 (MTKRIDSSLLYTALVVLLLLGVVHRSNA). The N-linked (GlcNAc...) asparagine glycan is linked to Asn-44. Residue 55–82 (DYIIVGGGTAGCPLAATLSQSFRVLLLE) participates in FAD binding. N-linked (GlcNAc...) asparagine glycosylation is found at Asn-162, Asn-259, and Asn-434. Residue His-492 is the Proton acceptor of the active site.

This sequence belongs to the GMC oxidoreductase family. In terms of assembly, monomer. Requires FAD as cofactor. In terms of processing, glycosylated.

It catalyses the reaction (R)-mandelonitrile = benzaldehyde + hydrogen cyanide. The protein is (R)-mandelonitrile lyase-like of Arabidopsis thaliana (Mouse-ear cress).